The chain runs to 91 residues: Small ribosomal subunit protein uS19 (91 aa).

It belongs to the universal ribosomal protein uS19 family.

In terms of biological role, protein S19 forms a complex with S13 that binds strongly to the 16S ribosomal RNA. The sequence is that of Small ribosomal subunit protein uS19 from Synechococcus sp. (strain CC9311).